The following is a 246-amino-acid chain: Adenosine 5'-phosphosulfate reductase (246 aa).

Residues C131, C132, C214, and C217 each coordinate [4Fe-4S] cluster. The active-site Nucleophile; cysteine thiosulfonate intermediate is the C242.

The protein belongs to the PAPS reductase family. CysH subfamily. The cofactor is [4Fe-4S] cluster.

Its subcellular location is the cytoplasm. It catalyses the reaction [thioredoxin]-disulfide + sulfite + AMP + 2 H(+) = adenosine 5'-phosphosulfate + [thioredoxin]-dithiol. Its pathway is sulfur metabolism; hydrogen sulfide biosynthesis; sulfite from sulfate. Its function is as follows. Catalyzes the formation of sulfite from adenosine 5'-phosphosulfate (APS) using thioredoxin as an electron donor. The polypeptide is Adenosine 5'-phosphosulfate reductase (Neisseria meningitidis serogroup B (strain ATCC BAA-335 / MC58)).